The following is an 87-amino-acid chain: Small ribosomal subunit protein bS20 (87 aa).

A compositionally biased stretch (basic residues) spans 1 to 11 (MANIKSKKKRI). The interval 1–25 (MANIKSKKKRIKTNEKARQRNKAIR) is disordered.

Belongs to the bacterial ribosomal protein bS20 family.

Binds directly to 16S ribosomal RNA. In Corynebacterium kroppenstedtii (strain DSM 44385 / JCM 11950 / CIP 105744 / CCUG 35717), this protein is Small ribosomal subunit protein bS20.